The chain runs to 583 residues: L-arabonate dehydratase (583 aa).

Residues cysteine 56, cysteine 124, and cysteine 197 each contribute to the [4Fe-4S] cluster site.

It belongs to the IlvD/Edd family. In terms of assembly, homodimer. [4Fe-4S] cluster is required as a cofactor.

It catalyses the reaction L-arabinonate = 2-dehydro-3-deoxy-L-arabinonate + H2O. With respect to regulation, activity is enhanced by Mg(2+), being optimal with a concentration of 1-10 mM Mg(2+). Its function is as follows. Catalyzes the dehydration of L-arabonate to L-2-keto-3-deoxyarabonate (L-KDA). Is involved in a degradation pathway of L-arabinose that allows A.brasilense to grow on L-arabinose as a sole carbon source. To a lesser extent, can also use D-xylonate as substrate, but not D-galactonate, D-arabonate, and D-gluconate. In Azospirillum brasilense, this protein is L-arabonate dehydratase (araC).